The following is a 568-amino-acid chain: PCNA-interacting partner (568 aa).

Residues 442-555 form a disordered region; the sequence is QIPTCVHPAP…RNNKAVSKKL (114 aa). A compositionally biased stretch (polar residues) spans 488–500; that stretch reads NAWNQTGGKSTQP. Positions 515–527 are enriched in basic and acidic residues; the sequence is ANRECTEQGREEN.

The protein belongs to the PARI family.

It is found in the cytoplasm. It localises to the nucleus. Required to suppress inappropriate homologous recombination, thereby playing a central role DNA repair and in the maintenance of genomic stability. The polypeptide is PCNA-interacting partner (parpbp) (Danio rerio (Zebrafish)).